Here is a 253-residue protein sequence, read N- to C-terminus: Acidic 26 kDa endochitinase (253 aa).

The first 24 residues, 1 to 24 (MKFNIVSPVALSCLFFLFLTGTLA), serve as a signal peptide directing secretion. Residue glutamate 92 is the Proton donor of the active site. Cysteine 212 and cysteine 244 form a disulfide bridge.

This sequence belongs to the glycosyl hydrolase 19 family. Chitinase class II subfamily.

It localises to the secreted. The protein localises to the extracellular space. It catalyses the reaction Random endo-hydrolysis of N-acetyl-beta-D-glucosaminide (1-&gt;4)-beta-linkages in chitin and chitodextrins.. In terms of biological role, defense against chitin-containing fungal pathogens. The sequence is that of Acidic 26 kDa endochitinase (CHI3) from Solanum lycopersicum (Tomato).